The chain runs to 396 residues: Elongation factor Tu (396 aa).

The region spanning 10–206 (KPHLNIGTIG…AVDENVPDPV (197 aa)) is the tr-type G domain. Residues 19 to 26 (GHVDHGKT) are G1. 19–26 (GHVDHGKT) contributes to the GTP binding site. T26 contributes to the Mg(2+) binding site. The tract at residues 62–66 (GITIN) is G2. A G3 region spans residues 83-86 (DAPG). Residues 83-87 (DAPGH) and 138-141 (NKSD) each bind GTP. The tract at residues 138-141 (NKSD) is G4. Positions 176-178 (SAL) are G5.

It belongs to the TRAFAC class translation factor GTPase superfamily. Classic translation factor GTPase family. EF-Tu/EF-1A subfamily. Monomer.

It is found in the cytoplasm. The catalysed reaction is GTP + H2O = GDP + phosphate + H(+). GTP hydrolase that promotes the GTP-dependent binding of aminoacyl-tRNA to the A-site of ribosomes during protein biosynthesis. The sequence is that of Elongation factor Tu from Kocuria rhizophila (strain ATCC 9341 / DSM 348 / NBRC 103217 / DC2201).